Here is a 554-residue protein sequence, read N- to C-terminus: Phosphomethylpyrimidine synthase (554 aa).

Residues N188, M217, Y246, H282, 302 to 304 (SRG), 343 to 346 (DGLR), and E382 contribute to the substrate site. A Zn(2+)-binding site is contributed by H386. Y409 is a binding site for substrate. Position 450 (H450) interacts with Zn(2+). C530, C533, and C538 together coordinate [4Fe-4S] cluster.

Belongs to the ThiC family. In terms of assembly, homodimer. Requires [4Fe-4S] cluster as cofactor.

It catalyses the reaction 5-amino-1-(5-phospho-beta-D-ribosyl)imidazole + S-adenosyl-L-methionine = 4-amino-2-methyl-5-(phosphooxymethyl)pyrimidine + CO + 5'-deoxyadenosine + formate + L-methionine + 3 H(+). Its pathway is cofactor biosynthesis; thiamine diphosphate biosynthesis. Catalyzes the synthesis of the hydroxymethylpyrimidine phosphate (HMP-P) moiety of thiamine from aminoimidazole ribotide (AIR) in a radical S-adenosyl-L-methionine (SAM)-dependent reaction. The protein is Phosphomethylpyrimidine synthase of Coxiella burnetii (strain Dugway 5J108-111).